We begin with the raw amino-acid sequence, 184 residues long: MGLEEKLPSGFLLSTVETLAGYVRKGSLWPATFGLACCAIEMMSTAGPRFDIARFGMERFSATPRQADLMIVAGRVSQKMAPVLRQIYDQMAEPKWVLAMGVCASSGGMFNNYAIVQGVDHVVPVDIYLPGCPPRPEMLLHAILKLHEKIAHMPLGANREEVIRETEAAALAATPTIEMKGLLR.

[4Fe-4S] cluster is bound by residues Cys-37, Cys-38, Cys-103, and Cys-132.

This sequence belongs to the complex I 20 kDa subunit family. In terms of assembly, NDH-1 is composed of 14 different subunits. Subunits NuoB, C, D, E, F, and G constitute the peripheral sector of the complex. Requires [4Fe-4S] cluster as cofactor.

Its subcellular location is the cell membrane. It catalyses the reaction a quinone + NADH + 5 H(+)(in) = a quinol + NAD(+) + 4 H(+)(out). Its function is as follows. NDH-1 shuttles electrons from NADH, via FMN and iron-sulfur (Fe-S) centers, to quinones in the respiratory chain. The immediate electron acceptor for the enzyme in this species is believed to be a menaquinone. Couples the redox reaction to proton translocation (for every two electrons transferred, four hydrogen ions are translocated across the cytoplasmic membrane), and thus conserves the redox energy in a proton gradient. This chain is NADH-quinone oxidoreductase subunit B, found in Mycobacteroides abscessus (strain ATCC 19977 / DSM 44196 / CCUG 20993 / CIP 104536 / JCM 13569 / NCTC 13031 / TMC 1543 / L948) (Mycobacterium abscessus).